The sequence spans 528 residues: Glucose-6-phosphate isomerase (528 aa).

Residue E322 is the Proton donor of the active site. Residues H351 and K455 contribute to the active site.

It belongs to the GPI family.

It is found in the cytoplasm. It carries out the reaction alpha-D-glucose 6-phosphate = beta-D-fructose 6-phosphate. The protein operates within carbohydrate biosynthesis; gluconeogenesis. It participates in carbohydrate degradation; glycolysis; D-glyceraldehyde 3-phosphate and glycerone phosphate from D-glucose: step 2/4. Catalyzes the reversible isomerization of glucose-6-phosphate to fructose-6-phosphate. This is Glucose-6-phosphate isomerase from Nostoc punctiforme (strain ATCC 29133 / PCC 73102).